The following is a 606-amino-acid chain: Endonuclease 8-like 3 (606 aa).

Val2 (schiff-base intermediate with DNA; via amino nitrogen) is an active-site residue. A disordered region spans residues 31–51; the sequence is ALQGLGGPGSPPAAPGPMGTS. DNA is bound by residues Asn194 and Arg273. Residues 249 to 283 form an FPG-type zinc finger; the sequence is KVYKRPNCGQCCCKITVCRLGENNRMTYFCPHCQK. The RanBP2-type zinc-finger motif lies at 319 to 348; the sequence is SEEQWTCEVCTLINKLSSKTCDACLTSRPA. At Ser451 the chain carries Phosphoserine. Zn(2+) contacts are provided by Cys508, His511, Cys534, Cys542, Cys555, His557, Cys580, and Cys588. GRF-type zinc fingers lie at residues 508-551 and 555-597; these read CSKH…ADLS and CNHG…AQNG.

This sequence belongs to the FPG family.

The protein localises to the nucleus. It is found in the chromosome. It catalyses the reaction 2'-deoxyribonucleotide-(2'-deoxyribose 5'-phosphate)-2'-deoxyribonucleotide-DNA = a 3'-end 2'-deoxyribonucleotide-(2,3-dehydro-2,3-deoxyribose 5'-phosphate)-DNA + a 5'-end 5'-phospho-2'-deoxyribonucleoside-DNA + H(+). Functionally, DNA glycosylase which prefers single-stranded DNA (ssDNA), or partially ssDNA structures such as bubble and fork structures, to double-stranded DNA (dsDNA). Mediates interstrand cross-link repair in response to replication stress: acts by mediating DNA glycosylase activity, cleaving one of the two N-glycosyl bonds comprising the interstrand cross-link, which avoids the formation of a double-strand break but generates an abasic site that is bypassed by translesion synthesis polymerases. In vitro, displays strong glycosylase activity towards the hydantoin lesions spiroiminodihydantoin (Sp) and guanidinohydantoin (Gh) in both ssDNA and dsDNA; also recognizes FapyA, FapyG, 5-OHU, 5-OHC, 5-OHMH, Tg and 8-oxoA lesions in ssDNA. No activity on 8-oxoG detected. Also shows weak DNA-(apurinic or apyrimidinic site) lyase activity. In vivo, appears to be the primary enzyme involved in removing Sp and Gh from ssDNA in neonatal tissues. This Bos taurus (Bovine) protein is Endonuclease 8-like 3 (NEIL3).